Reading from the N-terminus, the 476-residue chain is CDK5 and ABL1 enzyme substrate 2 (476 aa).

The interval 1–119 is disordered; that stretch reads MAAAAAGGAP…GLGLDGQRQR (119 aa). The segment covering 30–40 has biased composition (basic residues); that stretch reads PRRRGDSRRRQ. The segment covering 65-96 has biased composition (pro residues); the sequence is PAPPPPPPTEAREAPAPPPAPPGGLPGLPARP. 2 positions are modified to phosphoserine: Ser128 and Ser206. The segment at 256–295 is disordered; sequence DSHGLLPQPRPSIPRAPPGSRHKPVPTKSTPAGTELGSDG. Residues 263–272 show a composition bias toward pro residues; sequence QPRPSIPRAP.

Belongs to the cyclin family. As to quaternary structure, binds to CDK3, CDK5 and ABL1. The C-terminal cyclin-box-like region binds to CDK5. Widely expressed.

In terms of biological role, unknown. Probably involved in G1-S cell cycle transition. This Mus musculus (Mouse) protein is CDK5 and ABL1 enzyme substrate 2 (Cables2).